Here is a 380-residue protein sequence, read N- to C-terminus: Omega-3 fatty acid desaturase, endoplasmic reticulum (380 aa).

Residues 59–78 traverse the membrane as a helical segment; that stretch reads VLVVTALAASAISFNSWFFW. The Histidine box-1 signature appears at 97 to 101; that stretch reads HDCGH. The Histidine box-2 signature appears at 133–137; that stretch reads HRTHH. Helical transmembrane passes span 208–231 and 238–256; these read GVVTSTLCWGIVLSVLLYLSLTIG and LYGVPYLIFVMWLDFVTYL. The short motif at 300 to 304 is the Histidine box-3 element; that stretch reads HVIHH.

Belongs to the fatty acid desaturase type 1 family.

It localises to the endoplasmic reticulum membrane. It participates in lipid metabolism; polyunsaturated fatty acid biosynthesis. Microsomal (ER) omega-3 fatty acid desaturase introduces the third double bond in the biosynthesis of 18:3 fatty acids, important constituents of plant membranes. It is thought to use cytochrome b5 as an electron donor and to act on fatty acids esterified to phosphatidylcholine and, possibly, other phospholipids. The protein is Omega-3 fatty acid desaturase, endoplasmic reticulum (ARG1) of Vigna radiata var. radiata (Mung bean).